We begin with the raw amino-acid sequence, 832 residues long: Putative beta-glucosidase (832 aa).

The active site involves D225. Positions 397 to 556 (TGKHGYVAKF…DPETEIDYAV (160 aa)) constitute a PA14 domain.

The protein belongs to the glycosyl hydrolase 3 family.

It localises to the cytoplasm. The enzyme catalyses Hydrolysis of terminal, non-reducing beta-D-glucosyl residues with release of beta-D-glucose.. In Schizosaccharomyces pombe (strain 972 / ATCC 24843) (Fission yeast), this protein is Putative beta-glucosidase.